The following is an 87-amino-acid chain: MANSAQARKRARQNISHRNRNMSLRSELRTAIKHVRKAIGSADKNTAQAAYQASVATIDSIADKGIIHKNKAARHKSRLSSAIKAMA.

Residues 1–25 (MANSAQARKRARQNISHRNRNMSLR) are disordered. Positions 7–20 (ARKRARQNISHRNR) are enriched in basic residues.

This sequence belongs to the bacterial ribosomal protein bS20 family.

Binds directly to 16S ribosomal RNA. The protein is Small ribosomal subunit protein bS20 of Nitrosospira multiformis (strain ATCC 25196 / NCIMB 11849 / C 71).